The sequence spans 9439 residues: Extracellular matrix-binding protein ebh (9439 aa).

FIVAR domains are found at residues 1815–1871 (ARRR…VNSA), 1901–1957 (AKEQ…INDA), 1985–2041 (AYDT…VRDA), 2071–2127 (AKKR…ITSE), 2155–2211 (AYNK…VTQA), 2241–2297 (AKNR…ISSE), 2325–2381 (AYNK…VEDA), 2411–2467 (AKEK…ITEN), 2488–2551 (DTTS…VNNA), 2581–2638 (ARNR…STEI), 2665–2720 (AKNQ…IRTN), 2748–2804 (AKTA…VSDE), 2832–2888 (AYNQ…VNNA), 2918–2974 (AKEQ…ISNA), 3002–3058 (AYNQ…VTAA), 3088–3144 (AKQQ…ITNE), 3172–3228 (AYNQ…VAQA), 3258–3314 (AKNQ…ISDE), 3335–3398 (DTTE…VNNA), 3428–3484 (ARLN…ITTE), 3512–3567 (AKTA…IKTN), 3595–3650 (IKRQ…VKES), 3678–3733 (AKNR…IRQN), 3802–3860 (SMTA…IDQK), 3928–3983 (AMTQ…LDPA), 4056–4114 (AMQA…VNQK), 4182–4240 (SMGT…VDNA), 4308–4365 (AMHT…INQK), 4433–4491 (VMEQ…IEQA), and 4559–4617 (SMQT…IDQT). Residues 2495–2507 (EVRKLSRRGDTNN) show a composition bias toward basic and acidic residues. The tract at residues 2495–2514 (EVRKLSRRGDTNNKKPSSVS) is disordered. Over residues 2925–2938 (AVDQVPSTEGMTQQ) the composition is skewed to polar residues. Residues 2925–2951 (AVDQVPSTEGMTQQTKDDYNSKQQAAQ) form a disordered region. Residues 4649-4674 (GYLNDPQKSGEESLVNGSNTRSEVEE) form a disordered region. FIVAR domains follow at residues 4685-4743 (AMKQ…IEQK), 4811-4869 (AMQA…IEQA), 4937-4995 (AMSN…IEQA), 5063-5115 (AMEA…VLDK), 5189-5246 (AMLG…INQL), 5314-5372 (LMGA…VTTA), 5440-5498 (AMGE…IDQA), 5566-5624 (AMKK…ITNA), 5692-5750 (AMKQ…IADT), 5818-5875 (DMST…LQDL), 5943-6000 (AMKA…IKQA), 6068-6126 (KMEE…INRT), 6194-6252 (AMQQ…IQAI), and 6320-6378 (EMGT…IADA). Positions 5699–5712 (QVNQDDQISNSSPF) are enriched in polar residues. Residues 5699-5719 (QVNQDDQISNSSPFINEDSDK) form a disordered region. A disordered region spans residues 6413 to 6434 (NNSQRQSEHDEINSAPSRTEVS). FIVAR domains lie at 6446-6504 (AMRQ…IEDA), 6572-6630 (AMKA…INRA), 6698-6755 (SMNQ…IDQA), 6823-6877 (TMKA…ANDE), 6949-7007 (AMKK…INTI), 7075-7133 (SMNT…VERA), 7201-7259 (DMKK…IENA), 7327-7384 (AMKH…IKQL), 7452-7510 (AMEN…IEHA), 7578-7636 (AMKA…INSI), 7704-7762 (AMET…VDIV), 7830-7888 (AMKS…VRQA), 7956-8010 (VMGK…TKQA), 8078-8137 (IMGE…IDTF), 8205-8264 (AMKS…IQGL), 8332-8391 (AMKD…VLGL), 8459-8518 (KMKL…IQHL), and 8587-8643 (AMQG…ANII). The helical transmembrane segment at 9306–9324 (TVGVITLTGLLSSFWLVLA) threads the bilayer. Composition is skewed to basic and acidic residues over residues 9363-9375 (DKEE…DKHS), 9386-9395 (EKQLSEEDIH), and 9404-9413 (QNSDNKDTKQ). The segment at 9363–9439 (DKEEQIQNDD…VVKTKKRSKK (77 aa)) is disordered. Over residues 9414 to 9439 (KKVTSKKKKTPQSTKKVVKTKKRSKK) the composition is skewed to basic residues.

The protein localises to the cell membrane. This chain is Extracellular matrix-binding protein ebh (ebh), found in Staphylococcus epidermidis (strain ATCC 12228 / FDA PCI 1200).